The following is a 63-amino-acid chain: Cecropin-A1 (63 aa).

An N-terminal signal peptide occupies residues 1–19 (MNFYNIFVFVALILAITIG). Residue Arg62 is modified to Arginine amide.

This sequence belongs to the cecropin family.

Its subcellular location is the secreted. Cecropins have lytic and antibacterial activity against several Gram-positive and Gram-negative bacteria. The polypeptide is Cecropin-A1 (CecA1) (Drosophila simulans (Fruit fly)).